A 734-amino-acid polypeptide reads, in one-letter code: Photosystem I P700 chlorophyll a apoprotein A2 (734 aa).

The next 8 helical transmembrane spans lie at 46–69 (IFAS…FHVA), 135–158 (LYTG…LHLQ), 175–199 (LNHH…HVAI), 273–291 (IAHH…GHMY), 330–353 (IHFQ…QHMY), 369–395 (AALY…IFFI), 417–439 (AIKS…LYVH), and 517–535 (FLVH…LILV). Residues cysteine 559 and cysteine 568 each coordinate [4Fe-4S] cluster. Helical transmembrane passes span 575–596 (AFYL…YWHW) and 643–665 (LSVW…MFLI). Positions 654, 662, and 670 each coordinate chlorophyll a. Residue tryptophan 671 coordinates phylloquinone. A helical membrane pass occupies residues 707–727 (LVGLAHFSVGYIFTYAAFLIA).

This sequence belongs to the PsaA/PsaB family. In terms of assembly, the PsaA/B heterodimer binds the P700 chlorophyll special pair and subsequent electron acceptors. PSI consists of a core antenna complex that captures photons, and an electron transfer chain that converts photonic excitation into a charge separation. The eukaryotic PSI reaction center is composed of at least 11 subunits. The cofactor is P700 is a chlorophyll a/chlorophyll a' dimer, A0 is one or more chlorophyll a, A1 is one or both phylloquinones and FX is a shared 4Fe-4S iron-sulfur center..

It localises to the plastid. Its subcellular location is the chloroplast thylakoid membrane. It catalyses the reaction reduced [plastocyanin] + hnu + oxidized [2Fe-2S]-[ferredoxin] = oxidized [plastocyanin] + reduced [2Fe-2S]-[ferredoxin]. Functionally, psaA and PsaB bind P700, the primary electron donor of photosystem I (PSI), as well as the electron acceptors A0, A1 and FX. PSI is a plastocyanin-ferredoxin oxidoreductase, converting photonic excitation into a charge separation, which transfers an electron from the donor P700 chlorophyll pair to the spectroscopically characterized acceptors A0, A1, FX, FA and FB in turn. Oxidized P700 is reduced on the lumenal side of the thylakoid membrane by plastocyanin. The polypeptide is Photosystem I P700 chlorophyll a apoprotein A2 (Liriodendron tulipifera (Tuliptree)).